A 292-amino-acid chain; its full sequence is Chondroitin proteoglycan 3 (292 aa).

The first 17 residues, M1 to A17, serve as a signal peptide directing secretion. The interval D28–V103 is disordered. Low complexity predominate over residues G38–S80. A compositionally biased stretch (acidic residues) spans S81–S96. 2 N-linked (GlcNAc...) asparagine glycosylation sites follow: N174 and N254.

The sequence is that of Chondroitin proteoglycan 3 from Caenorhabditis elegans.